The following is a 155-amino-acid chain: Small ribosomal subunit protein uS7cz/uS7cy (155 aa).

The protein belongs to the universal ribosomal protein uS7 family. In terms of assembly, part of the 30S ribosomal subunit.

It is found in the plastid. It localises to the chloroplast. One of the primary rRNA binding proteins, it binds directly to 16S rRNA where it nucleates assembly of the head domain of the 30S subunit. The chain is Small ribosomal subunit protein uS7cz/uS7cy (rps7-A) from Nandina domestica (Heavenly bamboo).